The following is a 188-amino-acid chain: MNNQSFNNFSQVNSNSSFFADKPKNLQNTNLEMTNGTNPPSSFSKQTPQKRQSFGTNTNFSKGNSSRGSTSNKRKVLSVSQILARVNQKKQRKLEQKKRKKPLKPIIPPKSFILLFKDKPEKYVYNRRIIDYKHCGLLQRYIGLGGKILPRRQTKLTAKQQRYVAKTIKSARIMGLLPFVTKERSFFR.

Residues 1-19 (MNNQSFNNFSQVNSNSSFF) are compositionally biased toward low complexity. The tract at residues 1–79 (MNNQSFNNFS…TSNKRKVLSV (79 aa)) is disordered. The span at 25-71 (NLQNTNLEMTNGTNPPSSFSKQTPQKRQSFGTNTNFSKGNSSRGSTS) shows a compositional bias: polar residues.

It belongs to the bacterial ribosomal protein bS18 family. Part of the 30S ribosomal subunit.

The protein resides in the plastid. It is found in the chloroplast. This Tetradesmus obliquus (Green alga) protein is Small ribosomal subunit protein bS18c.